The following is a 113-amino-acid chain: MTNVCDLTDRKCKPCEGGVPPLEMEEAEKLLKQLEQGWQLADNKISRTFSFKNYYQTMAFVNAIAWVSHREDHHPDMMVGYDWCRVEYMTHAIGGLSENDFICAAKVDMLFKS.

Belongs to the pterin-4-alpha-carbinolamine dehydratase family.

It catalyses the reaction (4aS,6R)-4a-hydroxy-L-erythro-5,6,7,8-tetrahydrobiopterin = (6R)-L-erythro-6,7-dihydrobiopterin + H2O. This chain is Putative pterin-4-alpha-carbinolamine dehydratase, found in Nitrosomonas europaea (strain ATCC 19718 / CIP 103999 / KCTC 2705 / NBRC 14298).